A 388-amino-acid polypeptide reads, in one-letter code: Arginine biosynthesis bifunctional protein ArgJ (388 aa).

Substrate is bound by residues T150, K172, T183, E263, N383, and S388. T183 functions as the Nucleophile in the catalytic mechanism.

This sequence belongs to the ArgJ family. Heterotetramer of two alpha and two beta chains.

It is found in the cytoplasm. The enzyme catalyses N(2)-acetyl-L-ornithine + L-glutamate = N-acetyl-L-glutamate + L-ornithine. It carries out the reaction L-glutamate + acetyl-CoA = N-acetyl-L-glutamate + CoA + H(+). It functions in the pathway amino-acid biosynthesis; L-arginine biosynthesis; L-ornithine and N-acetyl-L-glutamate from L-glutamate and N(2)-acetyl-L-ornithine (cyclic): step 1/1. Its pathway is amino-acid biosynthesis; L-arginine biosynthesis; N(2)-acetyl-L-ornithine from L-glutamate: step 1/4. Functionally, catalyzes two activities which are involved in the cyclic version of arginine biosynthesis: the synthesis of N-acetylglutamate from glutamate and acetyl-CoA as the acetyl donor, and of ornithine by transacetylation between N(2)-acetylornithine and glutamate. The polypeptide is Arginine biosynthesis bifunctional protein ArgJ (Corynebacterium glutamicum (strain ATCC 13032 / DSM 20300 / JCM 1318 / BCRC 11384 / CCUG 27702 / LMG 3730 / NBRC 12168 / NCIMB 10025 / NRRL B-2784 / 534)).